The following is a 460-amino-acid chain: Hydroxyproline dehydrogenase (460 aa).

Lys310 is subject to N6-acetyllysine.

The protein belongs to the proline oxidase family. The cofactor is FAD.

The enzyme catalyses trans-4-hydroxy-L-proline + a quinone = (3R,5S)-1-pyrroline-3-hydroxy-5-carboxylate + a quinol + H(+). It carries out the reaction L-proline + a quinone = (S)-1-pyrroline-5-carboxylate + a quinol + H(+). Its activity is regulated as follows. Hydroproxyproline dehydrogenase activity is inhibited by THFA,(1R,3R)3-OH-cyclopentane-COOH and 5-OH-1H-pyrazole-3-COOH. Its function is as follows. Dehydrogenase that converts trans-4-L-hydroxyproline to delta-1-pyrroline-3-hydroxy-5-carboxylate (Hyp) using ubiquinone-10 as the terminal electron acceptor. Can also use proline as a substrate but with a very much lower efficiency. Does not react with other diastereomers of Hyp: trans-4-D-hydroxyproline and cis-4-L-hydroxyproline. Ubiquininone analogs such as menadione, duroquinone and ubiquinone-1 react more efficiently than oxygen as the terminal electron acceptor during catalysis. This chain is Hydroxyproline dehydrogenase, found in Homo sapiens (Human).